Reading from the N-terminus, the 439-residue chain is 26S rRNA (cytosine-C(5))-methyltransferase nsun-5 (439 aa).

S-adenosyl-L-methionine is bound by residues D266, D293, and D313. The active-site Nucleophile is the C366.

The protein belongs to the class I-like SAM-binding methyltransferase superfamily. RsmB/NOP family.

It carries out the reaction a cytidine in 26S rRNA + S-adenosyl-L-methionine = a 5-methylcytidine in 26S rRNA + S-adenosyl-L-homocysteine + H(+). Its function is as follows. S-adenosyl-L-methionine-dependent methyltransferase which methylates the carbon-5 position of cytosine 2381 to 5-methylcytosine (m5C2381) in 26S rRNA. Plays a role in the production of mature 5S, 5.8S, 18S and 26S rRNAs and promotes the processing of the internally transcribed spacer 2 (ITS2), which separates the 5.8S and 26S rRNAs on large pre-rRNA precursors. May play a role in the translation of leucine and proline codons. May play a role in maintaining ribosomal frameshifting in response to osmotic stress. Not required for global translation. The polypeptide is 26S rRNA (cytosine-C(5))-methyltransferase nsun-5 (Caenorhabditis elegans).